Reading from the N-terminus, the 552-residue chain is Protoheme IX farnesyltransferase, mitochondrial (552 aa).

The tract at residues 118–185 (AADIPPSTST…PSGEIPPDAS (68 aa)) is disordered. The segment covering 150–168 (EQAASASSNAPSEAAQTTP) has biased composition (low complexity). Transmembrane regions (helical) follow at residues 215–235 (LTML…VPDF), 245–267 (LSPL…ANAL), 296–316 (AAVC…QFGV), 318–338 (PTVA…YTPL), 346–366 (TWVG…AAAG), 387–407 (AGGW…FMAL), 441–461 (VFVP…SFAV), and 487–507 (ARGL…LALL).

Belongs to the UbiA prenyltransferase family.

The protein localises to the mitochondrion membrane. The catalysed reaction is heme b + (2E,6E)-farnesyl diphosphate + H2O = Fe(II)-heme o + diphosphate. Its function is as follows. Converts protoheme IX and farnesyl diphosphate to heme O. The sequence is that of Protoheme IX farnesyltransferase, mitochondrial (COX10) from Pyricularia oryzae (strain 70-15 / ATCC MYA-4617 / FGSC 8958) (Rice blast fungus).